The chain runs to 190 residues: Translation initiation factor IF-3 (190 aa).

Positions 159–190 (QSEVQQKPKREGRNMIMFLSPRKSPLIKKDNE) are disordered.

The protein belongs to the IF-3 family. In terms of assembly, monomer.

The protein localises to the cytoplasm. IF-3 binds to the 30S ribosomal subunit and shifts the equilibrium between 70S ribosomes and their 50S and 30S subunits in favor of the free subunits, thus enhancing the availability of 30S subunits on which protein synthesis initiation begins. The protein is Translation initiation factor IF-3 of Prochlorococcus marinus (strain MIT 9215).